Reading from the N-terminus, the 141-residue chain is MAIERTLSIIKPDAVAKNVIGKIYDRFESAGLKIVASKMAHLSQNEAEQFYGVHKDRPFFKDLVSFMISGPVMIQVLQGEGAIAKNRDLMGATDPKKAEKGTIRADFADSIDANAVHGSDAPETAAVEVAFFFPGMNVFNR.

The ATP site is built by Lys11, Phe59, Arg87, Thr93, Arg104, and Asn114. The active-site Pros-phosphohistidine intermediate is the His117.

The protein belongs to the NDK family. Homotetramer. Mg(2+) is required as a cofactor.

The protein localises to the cytoplasm. The catalysed reaction is a 2'-deoxyribonucleoside 5'-diphosphate + ATP = a 2'-deoxyribonucleoside 5'-triphosphate + ADP. It catalyses the reaction a ribonucleoside 5'-diphosphate + ATP = a ribonucleoside 5'-triphosphate + ADP. In terms of biological role, major role in the synthesis of nucleoside triphosphates other than ATP. The ATP gamma phosphate is transferred to the NDP beta phosphate via a ping-pong mechanism, using a phosphorylated active-site intermediate. In Polynucleobacter necessarius subsp. necessarius (strain STIR1), this protein is Nucleoside diphosphate kinase.